The following is a 396-amino-acid chain: NADH-quinone oxidoreductase subunit D (396 aa).

It belongs to the complex I 49 kDa subunit family. As to quaternary structure, NDH-1 is composed of 14 different subunits. Subunits NuoB, C, D, E, F, and G constitute the peripheral sector of the complex.

Its subcellular location is the cell inner membrane. The enzyme catalyses a quinone + NADH + 5 H(+)(in) = a quinol + NAD(+) + 4 H(+)(out). NDH-1 shuttles electrons from NADH, via FMN and iron-sulfur (Fe-S) centers, to quinones in the respiratory chain. The immediate electron acceptor for the enzyme in this species is believed to be ubiquinone. Couples the redox reaction to proton translocation (for every two electrons transferred, four hydrogen ions are translocated across the cytoplasmic membrane), and thus conserves the redox energy in a proton gradient. The protein is NADH-quinone oxidoreductase subunit D of Orientia tsutsugamushi (strain Boryong) (Rickettsia tsutsugamushi).